The following is a 291-amino-acid chain: MVRYPAVAGSFYPADEELVLMLERFFSDLGEEGNDRRITAGVAPHAGYIFSGYTASRTYKAIFEDGLPETFVILGPNHTGLGSPIAVHPPGTWITPLGEIEVDGELAREIAKISGIADLDDLAHKYEHSIEVQVPFIQYLAEKAGKEVKIVPITLGIQDEDVAEDLGRAIFEASRELGKDVVVIASTDFMHYGQIYGYVPFRARADELPHRIKEWDFRIIRRILDFDVRGMFEEIREMNHTMCGPGGVGTAIVYSRLAGAVEAELLHYTTSFEVSRSTEAVVGYASIVFRR.

Belongs to the MEMO1 family.

The polypeptide is MEMO1 family protein TK1477 (Thermococcus kodakarensis (strain ATCC BAA-918 / JCM 12380 / KOD1) (Pyrococcus kodakaraensis (strain KOD1))).